Consider the following 557-residue polypeptide: Ribonuclease J 2 (557 aa).

The Zn(2+) site is built by His-76, His-78, His-144, and Glu-166. Substrate is bound at residue 366 to 370; it reads HASSH.

The protein belongs to the metallo-beta-lactamase superfamily. RNA-metabolizing metallo-beta-lactamase-like family. Bacterial RNase J subfamily. As to quaternary structure, homodimer, may be a subunit of the RNA degradosome. Zn(2+) serves as cofactor.

The protein localises to the cytoplasm. Functionally, an RNase that has 5'-3' exonuclease and possibly endoonuclease activity. Involved in maturation of rRNA and in some organisms also mRNA maturation and/or decay. The protein is Ribonuclease J 2 of Staphylococcus epidermidis (strain ATCC 35984 / DSM 28319 / BCRC 17069 / CCUG 31568 / BM 3577 / RP62A).